The chain runs to 408 residues: LL-diaminopimelate aminotransferase (408 aa).

2 residues coordinate substrate: Tyr15 and Gly42. Pyridoxal 5'-phosphate-binding positions include Tyr72, 108–109, Tyr132, Asn187, Tyr218, and 246–248; these read SK and SFS. Positions 109, 132, and 187 each coordinate substrate. Lys249 bears the N6-(pyridoxal phosphate)lysine mark. Residues Arg257 and Asn292 each contribute to the pyridoxal 5'-phosphate site. Substrate is bound by residues Asn292 and Arg388.

The protein belongs to the class-I pyridoxal-phosphate-dependent aminotransferase family. LL-diaminopimelate aminotransferase subfamily. In terms of assembly, homodimer. Pyridoxal 5'-phosphate is required as a cofactor.

It carries out the reaction (2S,6S)-2,6-diaminopimelate + 2-oxoglutarate = (S)-2,3,4,5-tetrahydrodipicolinate + L-glutamate + H2O + H(+). It participates in amino-acid biosynthesis; L-lysine biosynthesis via DAP pathway; LL-2,6-diaminopimelate from (S)-tetrahydrodipicolinate (aminotransferase route): step 1/1. Involved in the synthesis of meso-diaminopimelate (m-DAP or DL-DAP), required for both lysine and peptidoglycan biosynthesis. Catalyzes the direct conversion of tetrahydrodipicolinate to LL-diaminopimelate. This chain is LL-diaminopimelate aminotransferase, found in Synechococcus sp. (strain RCC307).